The sequence spans 240 residues: Hairy and enhancer of split-related protein HELT (240 aa).

In terms of domain architecture, bHLH spans 10 to 65; it reads RTPVSHKVIEKRRRDRINRCLNELGKTVPMALAKQSSGKLEKAEILEMTVQYLRAL. N6-acetyllysine is present on K48. In terms of domain architecture, Orange spans 86-121; that stretch reads FHYGYHECMKNLVHYLTTVERMETKDTKYARILAFL.

This sequence belongs to the HEY family. Self-associates. Interacts with HES5 and HEY2. As to expression, expressed in heart and testis.

It is found in the nucleus. In terms of biological role, transcriptional repressor which binds preferentially to the canonical E box sequence 5'-CACGCG-3'. Required for the development of GABAergic neurons. This chain is Hairy and enhancer of split-related protein HELT (Helt), found in Mus musculus (Mouse).